A 275-amino-acid polypeptide reads, in one-letter code: Release factor glutamine methyltransferase (275 aa).

S-adenosyl-L-methionine is bound by residues 114-118 (GTGSG), D137, W165, and N180. 180–183 (NPPY) provides a ligand contact to substrate.

This sequence belongs to the protein N5-glutamine methyltransferase family. PrmC subfamily.

The enzyme catalyses L-glutaminyl-[peptide chain release factor] + S-adenosyl-L-methionine = N(5)-methyl-L-glutaminyl-[peptide chain release factor] + S-adenosyl-L-homocysteine + H(+). Methylates the class 1 translation termination release factors RF1/PrfA and RF2/PrfB on the glutamine residue of the universally conserved GGQ motif. The chain is Release factor glutamine methyltransferase from Xylella fastidiosa (strain 9a5c).